The sequence spans 464 residues: tRNA modification GTPase MnmE (464 aa).

The (6S)-5-formyl-5,6,7,8-tetrahydrofolate site is built by Arg-25, Glu-87, and Lys-130. The TrmE-type G domain occupies 226–386 (GLSVVLAGQP…LREELLRIAG (161 aa)). Asn-236 contacts K(+). Residues 236-241 (NVGKSS), 255-261 (TPIAGTT), and 280-283 (DTAG) each bind GTP. Ser-240 is a binding site for Mg(2+). K(+)-binding residues include Thr-255, Ile-257, and Thr-260. Mg(2+) is bound at residue Thr-261. Lys-464 is a (6S)-5-formyl-5,6,7,8-tetrahydrofolate binding site.

It belongs to the TRAFAC class TrmE-Era-EngA-EngB-Septin-like GTPase superfamily. TrmE GTPase family. As to quaternary structure, homodimer. Heterotetramer of two MnmE and two MnmG subunits. K(+) is required as a cofactor.

The protein resides in the cytoplasm. Exhibits a very high intrinsic GTPase hydrolysis rate. Involved in the addition of a carboxymethylaminomethyl (cmnm) group at the wobble position (U34) of certain tRNAs, forming tRNA-cmnm(5)s(2)U34. The protein is tRNA modification GTPase MnmE of Paraburkholderia xenovorans (strain LB400).